The primary structure comprises 416 residues: Ribulose bisphosphate carboxylase large chain (416 aa).

Residues asparagine 100 and threonine 150 each contribute to the substrate site. The active-site Proton acceptor is the lysine 152. Position 154 (lysine 154) interacts with substrate. Residues lysine 178, aspartate 180, and glutamate 181 each coordinate Mg(2+). Residue lysine 178 is modified to N6-carboxylysine. Histidine 271 (proton acceptor) is an active-site residue. Positions 272, 304, and 356 each coordinate substrate.

Belongs to the RuBisCO large chain family. Type I subfamily. In terms of assembly, heterohexadecamer of 8 large chains and 8 small chains; disulfide-linked. The disulfide link is formed within the large subunit homodimers. Mg(2+) is required as a cofactor. The disulfide bond which can form in the large chain dimeric partners within the hexadecamer appears to be associated with oxidative stress and protein turnover.

It localises to the plastid. It is found in the chloroplast. It catalyses the reaction 2 (2R)-3-phosphoglycerate + 2 H(+) = D-ribulose 1,5-bisphosphate + CO2 + H2O. It carries out the reaction D-ribulose 1,5-bisphosphate + O2 = 2-phosphoglycolate + (2R)-3-phosphoglycerate + 2 H(+). Its function is as follows. RuBisCO catalyzes two reactions: the carboxylation of D-ribulose 1,5-bisphosphate, the primary event in carbon dioxide fixation, as well as the oxidative fragmentation of the pentose substrate in the photorespiration process. Both reactions occur simultaneously and in competition at the same active site. The chain is Ribulose bisphosphate carboxylase large chain (rbcL) from Cheiropleuria bicuspis (Fern).